Reading from the N-terminus, the 162-residue chain is Inner membrane protein YbjO (162 aa).

The Periplasmic segment spans residues 1–23; it reads MEDETLGFFKKTSSSHARLNVPA. Residues 24 to 44 form a helical membrane-spanning segment; sequence LVQVAALAIIMIRGLDVLMIF. Residues 45–66 are Cytoplasmic-facing; that stretch reads NTLGVRGIGEFIHRSVQTWSLT. Residues 67–87 form a helical membrane-spanning segment; that stretch reads LVFLSSLVLVFIEIWCAFSLV. Residues 88 to 94 lie on the Periplasmic side of the membrane; the sequence is KGRRWAR. A helical transmembrane segment spans residues 95 to 115; the sequence is WLYLLTQITAASYLWAASLGY. Over 116 to 162 the chain is Cytoplasmic; that stretch reads GYPELFSIPGESKREIFHSLMLQKLPDMLILMLLFVPSTSRRFFQLQ.

Its subcellular location is the cell inner membrane. The sequence is that of Inner membrane protein YbjO (ybjO) from Escherichia coli O157:H7.